Consider the following 146-residue polypeptide: Hemoglobin subunit beta (146 aa).

Residues 2–146 (FLTAEEKGLV…VANALAHKYH (145 aa)) form the Globin domain. Ser44 is modified (phosphoserine). At Lys59 the chain carries N6-acetyllysine. His63 provides a ligand contact to heme b. Lys82 is modified (N6-acetyllysine). His92 provides a ligand contact to heme b. S-nitrosocysteine is present on Cys93. An N6-acetyllysine modification is found at Lys144.

The protein belongs to the globin family. As to quaternary structure, heterotetramer of two alpha chains and two beta chains. Red blood cells.

Involved in oxygen transport from the lung to the various peripheral tissues. This Lynx lynx (Eurasian lynx) protein is Hemoglobin subunit beta (HBB).